The sequence spans 347 residues: Fatty acid elongase 2 (347 aa).

At 1–62 (MNSLVTQYAA…PSEFQFIAGE (62 aa)) the chain is on the lumenal side. Asn32 is a glycosylation site (N-linked (GlcNAc...) asparagine). The chain crosses the membrane as a helical span at residues 63–83 (LPLSTLPPVLYAITAYYVIIF). Residues 84-96 (GGRFLLSKSKPFK) are Cytoplasmic-facing. The chain crosses the membrane as a helical span at residues 97–119 (LNGLFQLHNLVLTSLSLTLLLLM). At 120-122 (VEQ) the chain is on the lumenal side. Residues 123–142 (LVPIIVQHGLYFAICNIGAW) traverse the membrane as a helical segment. Over 143–146 (TQPL) the chain is Cytoplasmic. The chain crosses the membrane as a helical span at residues 147 to 169 (VTLYYMNYIVKFIEFIDTFFLVL). Residues 170–200 (KHKKLTFLHTYHHGATALLCYTQLMGTTSIS) are Lumenal-facing. Positions 178–182 (HTYHH) match the HxxHH motif motif. Residues 201-221 (WVPISLNLGVHVVMYWYYFLA) traverse the membrane as a helical segment. Over 222–231 (ARGIRVWWKE) the chain is Cytoplasmic. A helical membrane pass occupies residues 232 to 254 (WVTRFQIIQFVLDIGFIYFAVYQ). The Lumenal portion of the chain corresponds to 255–275 (KAVHLYFPILPHCGDCVGSTT). The chain crosses the membrane as a helical span at residues 276 to 296 (ATFAGCAIISSYLVLFISFYI). Over 297–347 (NVYKRKGTKTSRVVKRAHGGVAAKVNEYVNVDLKNVPTPSPSPKPQHRRKR) the chain is Cytoplasmic. Thr334 carries the phosphothreonine modification. A phosphoserine mark is found at Ser336 and Ser338. A Di-lysine-like motif motif is present at residues 344–347 (RRKR).

It belongs to the ELO family.

Its subcellular location is the endoplasmic reticulum membrane. The enzyme catalyses a very-long-chain acyl-CoA + malonyl-CoA + H(+) = a very-long-chain 3-oxoacyl-CoA + CO2 + CoA. It catalyses the reaction octadecanoyl-CoA + malonyl-CoA + H(+) = 3-oxoeicosanoyl-CoA + CO2 + CoA. It carries out the reaction hexadecanoyl-CoA + malonyl-CoA + H(+) = 3-oxooctadecanoyl-CoA + CO2 + CoA. The catalysed reaction is eicosanoyl-CoA + malonyl-CoA + H(+) = 3-oxodocosanoyl-CoA + CO2 + CoA. The enzyme catalyses docosanoyl-CoA + malonyl-CoA + H(+) = 3-oxotetracosanoyl-CoA + CO2 + CoA. Its function is as follows. Component of a microsomal membrane-bound long-chain fatty acid elongation system, which produces the 20-26-carbon very long-chain fatty acids (VLCFA) from long-chain fatty acid precursors and is involved ceramide and inositol sphingolipid biosynthesis. Component of elongase II, which elongates 16-18 carbon fatty acyl-CoAs such as palmitoyl-CoA and stearoyl-CoA to 20-22-carbon fatty acids by incorporation of malonyl-CoA. Involved in the synthesis of 1,3-beta-glucan. The enzymes active site faces the cytosol, whereas VLCFA length is determined by a lysine near the luminal end of transmembrane helix 6. Plays an important role in lipotoxic cell death induced by oleic acid through maintaining a balanced fatty acid composition in thr plasma membrane. The polypeptide is Fatty acid elongase 2 (Saccharomyces cerevisiae (strain ATCC 204508 / S288c) (Baker's yeast)).